Reading from the N-terminus, the 1084-residue chain is Autophagy-related protein 11 (1084 aa).

Coiled-coil stretches lie at residues 585 to 739 (VQNL…LTES) and 847 to 879 (VIRR…TNDK). 2 disordered regions span residues 925–961 (SMIP…NMNR) and 973–1007 (NIGS…STNA). 2 stretches are compositionally biased toward low complexity: residues 940-949 (SNTNNSNPSS) and 973-993 (NIGS…NGNN). Residues 994-1007 (KPETNIDTTSSTNA) show a composition bias toward polar residues.

Belongs to the ATG11 family. Homodimer and potential homooligomers. Interacts with ATG1 kinase and the ATG19 and ATG34 cargo protein transporters. Interacts with ATG9, ATG17 and ATG20.

Its subcellular location is the preautophagosomal structure membrane. The protein localises to the vacuole membrane. Involved in cytoplasm to vacuole transport (Cvt), pexophagy, mitophagy and nucleophagy. Recruits mitochondria for their selective degradation via autophagy (mitophagy) during starvation, through its interaction with ATG32. Works as scaffold proteins that recruit ATG proteins to the pre-autophagosome (PAS), the site of vesicle/autophagosome formation. Required for ATG9 anterograde transport from the mitochondria to the PAS. Also recruits the ATG19-prAPE1 complex to the PAS. Required for the Cvt vesicles completion. This Kluyveromyces marxianus (strain DMKU3-1042 / BCC 29191 / NBRC 104275) (Yeast) protein is Autophagy-related protein 11.